The following is a 352-amino-acid chain: Phosphoribosylformylglycinamidine cyclo-ligase (352 aa).

The protein belongs to the AIR synthase family.

It is found in the cytoplasm. The catalysed reaction is 2-formamido-N(1)-(5-O-phospho-beta-D-ribosyl)acetamidine + ATP = 5-amino-1-(5-phospho-beta-D-ribosyl)imidazole + ADP + phosphate + H(+). It participates in purine metabolism; IMP biosynthesis via de novo pathway; 5-amino-1-(5-phospho-D-ribosyl)imidazole from N(2)-formyl-N(1)-(5-phospho-D-ribosyl)glycinamide: step 2/2. The polypeptide is Phosphoribosylformylglycinamidine cyclo-ligase (Teredinibacter turnerae (strain ATCC 39867 / T7901)).